Consider the following 391-residue polypeptide: Apolipoprotein A-IV (391 aa).

A signal peptide spans 1–20; that stretch reads MFLKAVVLTVALVAITGTQA. Repeat copies occupy residues 33–54, 60–81, 82–103, 115–136, 137–158, 159–180, 181–202, 203–224, 225–246, 247–268, 269–286, 287–308, and 309–330. Residues 33–330 are 13 X 22 AA approximate tandem repeats; the sequence is DYFTQLSNNA…QMEKFRQQLG (298 aa). Serine 333 is modified (phosphoserine). The interval 354-391 is disordered; sequence FMSTLQKKGSPDQPLALPLPEQVQEQVQEQVQPKPLES. Residues 371–391 show a composition bias toward low complexity; that stretch reads PLPEQVQEQVQEQVQPKPLES.

The protein belongs to the apolipoprotein A1/A4/E family. Homodimer. As to expression, secreted in plasma.

Its subcellular location is the secreted. May have a role in chylomicrons and VLDL secretion and catabolism. Required for efficient activation of lipoprotein lipase by ApoC-II; potent activator of LCAT. Apoa-IV is a major component of HDL and chylomicrons. The chain is Apolipoprotein A-IV (Apoa4) from Rattus norvegicus (Rat).